Here is a 1877-residue protein sequence, read N- to C-terminus: Transmembrane protein 131 (1877 aa).

The N-terminal stretch at 1 to 20 (MGKRAGGAAAAAAAASTSSA) is a signal peptide. Topologically, residues 21-1115 (AGLEPAAGRG…AEALPRPNWE (1095 aa)) are lumenal. Residues 107–281 (RFEPPMLDFH…ETKGVMRASF (175 aa)) are papD-L domain. A helical membrane pass occupies residues 1116 to 1136 (LALYIIISGVMSALFLLVIGT). Over 1137 to 1877 (AYLEAQGIWE…WSNSHFPHEN (741 aa)) the chain is Cytoplasmic. The span at 1197–1227 (NASSRPGTGSHRQCGTSVHPHSSHGSKNSAD) shows a compositional bias: polar residues. 4 disordered regions span residues 1197–1573 (NASS…SSST), 1590–1655 (LKQR…NPTF), 1679–1707 (SDFS…SPVS), and 1830–1852 (NSAA…TYNP). Positions 1233 to 1258 (TRNSSSMSSRTSPQAAASQSTSKTSP) are enriched in low complexity. Residues 1301-1311 (QPPPPVPQHQE) show a composition bias toward pro residues. 2 positions are modified to phosphoserine: S1318 and S1338. Composition is skewed to basic and acidic residues over residues 1326–1339 (SHPE…HSSE) and 1349–1360 (AMDKDFDHHDSS). S1371 bears the Phosphoserine mark. Basic residues predominate over residues 1376–1391 (SKGKGKSLQQRKAKPP). Over residues 1392–1414 (KKQEEKEKRGKGKPQEDELKDAL) the composition is skewed to basic and acidic residues. Low complexity predominate over residues 1420–1432 (SSTTTETSNPDTE). Composition is skewed to polar residues over residues 1507 to 1523 (TLAS…TKGT) and 1538 to 1550 (LPSS…TSSS). Pro residues predominate over residues 1599–1608 (PASPSLPTAP). The segment covering 1609-1646 (CPFTSRGSYSSVVNSSGSDTKAKQTSSSKSKLTKAASL) has biased composition (low complexity). Positions 1830–1839 (NSAAAHTPSA) are enriched in polar residues. A phosphoserine mark is found at S1857 and S1865.

This sequence belongs to the TMEM131 family. In terms of assembly, interacts (via PapD-L domain) with COL1A2 (via C-terminus); the interaction is direct, may occur with other collagen proteins, and is involved in assembly and TRAPPIII ER-to-Golgi transport complex-dependent secretion of collagen. Interacts (via C-terminus) with TRAPPC8 (via C-terminus); the interaction is direct.

Its subcellular location is the membrane. Its function is as follows. Collagen binding transmembrane protein involved in collagen secretion by recruiting the ER-to-Golgi transport complex TRAPPIII. May play a role in the immune response to viral infection. This is Transmembrane protein 131 from Mus musculus (Mouse).